Reading from the N-terminus, the 758-residue chain is 5-methyltetrahydropteroyltriglutamate--homocysteine methyltransferase (758 aa).

Residues arginine 16–lysine 19 and lysine 112 contribute to the 5-methyltetrahydropteroyltri-L-glutamate site. L-homocysteine contacts are provided by residues isoleucine 433–serine 435 and glutamate 486. L-methionine-binding positions include isoleucine 433–serine 435 and glutamate 486. 5-methyltetrahydropteroyltri-L-glutamate is bound by residues arginine 517–cysteine 518 and tryptophan 563. L-homocysteine is bound at residue aspartate 601. Residue aspartate 601 coordinates L-methionine. Residue glutamate 607 coordinates 5-methyltetrahydropteroyltri-L-glutamate. 3 residues coordinate Zn(2+): histidine 643, cysteine 645, and glutamate 667. Histidine 696 (proton donor) is an active-site residue. Zn(2+) is bound at residue cysteine 728.

This sequence belongs to the vitamin-B12 independent methionine synthase family. Zn(2+) serves as cofactor.

The enzyme catalyses 5-methyltetrahydropteroyltri-L-glutamate + L-homocysteine = tetrahydropteroyltri-L-glutamate + L-methionine. Its pathway is amino-acid biosynthesis; L-methionine biosynthesis via de novo pathway; L-methionine from L-homocysteine (MetE route): step 1/1. Catalyzes the transfer of a methyl group from 5-methyltetrahydrofolate to homocysteine resulting in methionine formation. This is 5-methyltetrahydropteroyltriglutamate--homocysteine methyltransferase from Neisseria meningitidis serogroup B (strain ATCC BAA-335 / MC58).